The primary structure comprises 92 residues: Acylphosphatase (92 aa).

Positions 4–92 (AVQLDVFGRV…SACHKFSVVG (89 aa)) constitute an Acylphosphatase-like domain. Catalysis depends on residues Arg19 and Asn37.

It belongs to the acylphosphatase family.

It carries out the reaction an acyl phosphate + H2O = a carboxylate + phosphate + H(+). This is Acylphosphatase (acyP) from Latilactobacillus sakei subsp. sakei (strain 23K) (Lactobacillus sakei subsp. sakei).